An 88-amino-acid chain; its full sequence is UPF0213 protein EF_2693 (88 aa).

The GIY-YIG domain occupies 5–82 (KSHYFYVLLC…KKLTRKQKEQ (78 aa)).

It belongs to the UPF0213 family.

This is UPF0213 protein EF_2693 from Enterococcus faecalis (strain ATCC 700802 / V583).